Reading from the N-terminus, the 194-residue chain is NADH-quinone oxidoreductase subunit B (194 aa).

[4Fe-4S] cluster is bound by residues C72, C73, C137, and C167.

This sequence belongs to the complex I 20 kDa subunit family. As to quaternary structure, NDH-1 is composed of 14 different subunits. Subunits NuoB, C, D, E, F, and G constitute the peripheral sector of the complex. It depends on [4Fe-4S] cluster as a cofactor.

The protein localises to the cell inner membrane. It catalyses the reaction a quinone + NADH + 5 H(+)(in) = a quinol + NAD(+) + 4 H(+)(out). NDH-1 shuttles electrons from NADH, via FMN and iron-sulfur (Fe-S) centers, to quinones in the respiratory chain. Couples the redox reaction to proton translocation (for every two electrons transferred, four hydrogen ions are translocated across the cytoplasmic membrane), and thus conserves the redox energy in a proton gradient. In Granulibacter bethesdensis (strain ATCC BAA-1260 / CGDNIH1), this protein is NADH-quinone oxidoreductase subunit B.